Consider the following 603-residue polypeptide: MAKHIVELTDALSNKIAAGEVVERPASVVKELVENAIDAGSTVIDILVEEAGLNKITIIDNGSGIEEEDVAIAFLRHATSKIKNEADLFRVHTLGFRGEALPSIASVSHLTLETSTGETKGTTISLEGGKIIEQKSGHARKGTQIEVSQLFFNTPARLKYLKSLPTELGNITDILNRLALAHPDISFRFSHNGKPLLQTNGNGDLRQVIAAIYGVSIARKSIPVKAESLDFKISGYAVLPEVNRSNRNYISTIINGRFIKNFALVKAIQEGYHTLLPIGRFPIIVLQIEMDPIIVDVNVHPAKLEVRLSKEKELGQLISQMIKDAFHQLQLIPDGEVSKKQKEQQKSEQIQMSFEENRQPKEPPTLFSKPNIPEYVPSDEIVPKEDDFILETMPTYNPETQPEQVEEQKERIPKMYPIGQMHATYIFAQNENGLYIIDQHAAQERIKYEFYREKIGEVSRELQELLVPIVLEFPSDEYVRLEEQKAKLEEVGVFLENFGQNSFIIRAHPTWFPKDQEEEMLREIIDEALSAPSISIHKLREDTAIMMSCKKSIKANHYLTMQDMEALLDTLREASDPFTCPHGRPVIIQYSTYELEKMFKRVM.

Residues Glu-336–Lys-346 show a composition bias toward basic and acidic residues. Residues Glu-336 to Ile-372 are disordered.

The protein belongs to the DNA mismatch repair MutL/HexB family.

Functionally, this protein is involved in the repair of mismatches in DNA. It is required for dam-dependent methyl-directed DNA mismatch repair. May act as a 'molecular matchmaker', a protein that promotes the formation of a stable complex between two or more DNA-binding proteins in an ATP-dependent manner without itself being part of a final effector complex. This Listeria innocua serovar 6a (strain ATCC BAA-680 / CLIP 11262) protein is DNA mismatch repair protein MutL.